The chain runs to 428 residues: Gamma-glutamyl phosphate reductase (428 aa).

It belongs to the gamma-glutamyl phosphate reductase family.

The protein localises to the cytoplasm. The catalysed reaction is L-glutamate 5-semialdehyde + phosphate + NADP(+) = L-glutamyl 5-phosphate + NADPH + H(+). It functions in the pathway amino-acid biosynthesis; L-proline biosynthesis; L-glutamate 5-semialdehyde from L-glutamate: step 2/2. Catalyzes the NADPH-dependent reduction of L-glutamate 5-phosphate into L-glutamate 5-semialdehyde and phosphate. The product spontaneously undergoes cyclization to form 1-pyrroline-5-carboxylate. This Streptomyces coelicolor (strain ATCC BAA-471 / A3(2) / M145) protein is Gamma-glutamyl phosphate reductase.